A 351-amino-acid polypeptide reads, in one-letter code: Protein TBATA (351 aa).

4 disordered regions span residues 16–40 (KAEL…PQKE), 167–186 (KKEK…KYSA), 195–216 (STRA…SSRH), and 292–351 (EVHE…RAES). Residues 167–181 (KKEKEQKEEPLREQG) are compositionally biased toward basic and acidic residues. 2 stretches are compositionally biased toward basic and acidic residues: residues 292 to 302 (EVHEPPQEKQE) and 340 to 351 (TEKKTSKPRAES).

This sequence belongs to the TBATA family.

The protein resides in the cytoplasm. It localises to the cytosol. May play a role in spermatid differentiation. Modulates thymic stromal cell proliferation and thymus function. The chain is Protein TBATA (TBATA) from Homo sapiens (Human).